Here is a 421-residue protein sequence, read N- to C-terminus: WD repeat and SOCS box-containing protein 1 (421 aa).

WD repeat units follow at residues 124 to 165 (SRCV…LLLN), 168 to 208 (DHIE…NMVK), 212 to 251 (AHQN…MIRK), 254 to 293 (GHHH…LLME), and 309 to 346 (ANDR…DCPV). The region spanning 372-421 (DGSVYFWATPRQVPSLQHICRMSIRRVMSTQEVQKLPVPSKILAFLSYRG) is the SOCS box domain.

As to quaternary structure, interacts with DIO2. Component of the probable ECS(WSB1) E3 ubiquitin-protein ligase complex which contains CUL5, RNF7/RBX2, Elongin BC complex and WSB1. Component of a probable ECS-like E3 ubiquitin-protein ligase complex which contains CUL5, RBX1, Elongin BC complex and WSB1. Interacts with CUL5, RNF7, ELOB and ELOC. Binds to HIPK2 through WD40 repeats.

The protein operates within protein modification; protein ubiquitination. Probable substrate-recognition component of a SCF-like ECS (Elongin-Cullin-SOCS-box protein) E3 ubiquitin ligase complex which mediates the ubiquitination and subsequent proteasomal degradation of target proteins. Recognizes type II iodothyronine deiodinase/DIO2. Confers constitutive instability to HIPK2 through proteasomal degradation. In Mus musculus (Mouse), this protein is WD repeat and SOCS box-containing protein 1 (Wsb1).